A 55-amino-acid chain; its full sequence is Large ribosomal subunit protein bL33 (55 aa).

This sequence belongs to the bacterial ribosomal protein bL33 family.

In Maricaulis maris (strain MCS10) (Caulobacter maris), this protein is Large ribosomal subunit protein bL33.